The chain runs to 883 residues: Translation initiation factor IF-2 (883 aa).

Disordered regions lie at residues 52-102 and 115-297; these read KGRD…VNVE and VEAE…PTQP. 2 stretches are compositionally biased toward basic and acidic residues: residues 115 to 179 and 204 to 237; these read VEAE…REAT and AAEKEEARRREEEKERRRLEQEARREREAEERAA. A compositionally biased stretch (low complexity) spans 239–248; that stretch reads KTGATAPAAK. Over residues 265–275 the composition is skewed to basic residues; the sequence is PGRRGGKKGGR. Residues 276 to 285 are compositionally biased toward low complexity; that stretch reads RAASGGEAAK. A tr-type G domain is found at 383 to 550; sequence PRPPVVTVMG…AILLQAELME (168 aa). The G1 stretch occupies residues 392 to 399; it reads GHVDHGKT. 392 to 399 serves as a coordination point for GTP; it reads GHVDHGKT. Positions 417–421 are G2; the sequence is GITQH. The G3 stretch occupies residues 438–441; it reads DTPG. Residues 438–442 and 492–495 each bind GTP; these read DTPGH and NKID. The segment at 492–495 is G4; sequence NKID. The interval 528-530 is G5; sequence SAK.

The protein belongs to the TRAFAC class translation factor GTPase superfamily. Classic translation factor GTPase family. IF-2 subfamily.

It localises to the cytoplasm. Its function is as follows. One of the essential components for the initiation of protein synthesis. Protects formylmethionyl-tRNA from spontaneous hydrolysis and promotes its binding to the 30S ribosomal subunits. Also involved in the hydrolysis of GTP during the formation of the 70S ribosomal complex. The sequence is that of Translation initiation factor IF-2 from Alkalilimnicola ehrlichii (strain ATCC BAA-1101 / DSM 17681 / MLHE-1).